A 93-amino-acid polypeptide reads, in one-letter code: Small ribosomal subunit protein uS15 (93 aa).

This sequence belongs to the universal ribosomal protein uS15 family. Part of the 30S ribosomal subunit. Forms a bridge to the 50S subunit in the 70S ribosome, contacting the 23S rRNA.

One of the primary rRNA binding proteins, it binds directly to 16S rRNA where it helps nucleate assembly of the platform of the 30S subunit by binding and bridging several RNA helices of the 16S rRNA. Functionally, forms an intersubunit bridge (bridge B4) with the 23S rRNA of the 50S subunit in the ribosome. The protein is Small ribosomal subunit protein uS15 of Anaplasma marginale (strain St. Maries).